The primary structure comprises 486 residues: Homoserine O-acetyltransferase (486 aa).

An AB hydrolase-1 domain is found at 66 to 436 (NVLVICHALT…PEGHDAFLLE (371 aa)). S162 (nucleophile) is an active-site residue. The segment at 248-281 (KFSRRSPSIAQQQKAQREETRKPSTVSEHSLQIH) is disordered. Composition is skewed to polar residues over residues 250-261 (SRRSPSIAQQQK) and 270-280 (PSTVSEHSLQI). Active-site residues include D401 and H430.

It belongs to the AB hydrolase superfamily. MetX family.

The protein localises to the cytoplasm. The catalysed reaction is L-homoserine + acetyl-CoA = O-acetyl-L-homoserine + CoA. It participates in amino-acid biosynthesis; L-methionine biosynthesis via de novo pathway; O-acetyl-L-homoserine from L-homoserine: step 1/1. Functionally, commits homoserine to the methionine biosynthesis pathway by catalyzing its O-acetylation. In Saccharomyces cerevisiae (strain ATCC 204508 / S288c) (Baker's yeast), this protein is Homoserine O-acetyltransferase (MET2).